Here is a 206-residue protein sequence, read N- to C-terminus: Cytochrome c biogenesis ATP-binding export protein CcmA (206 aa).

One can recognise an ABC transporter domain in the interval Leu4 to Leu205. Position 36 to 43 (Gly36 to Thr43) interacts with ATP.

The protein belongs to the ABC transporter superfamily. CcmA exporter (TC 3.A.1.107) family. The complex is composed of two ATP-binding proteins (CcmA) and two transmembrane proteins (CcmB).

The protein resides in the cell inner membrane. It catalyses the reaction heme b(in) + ATP + H2O = heme b(out) + ADP + phosphate + H(+). Functionally, part of the ABC transporter complex CcmAB involved in the biogenesis of c-type cytochromes; once thought to export heme, this seems not to be the case, but its exact role is uncertain. Responsible for energy coupling to the transport system. This chain is Cytochrome c biogenesis ATP-binding export protein CcmA, found in Nitrosospira multiformis (strain ATCC 25196 / NCIMB 11849 / C 71).